A 426-amino-acid polypeptide reads, in one-letter code: Enolase (426 aa).

Gln163 is a binding site for (2R)-2-phosphoglycerate. Glu205 (proton donor) is an active-site residue. 3 residues coordinate Mg(2+): Asp242, Glu283, and Asp310. Residues Lys335, Arg364, Ser365, and Lys386 each contribute to the (2R)-2-phosphoglycerate site. Lys335 (proton acceptor) is an active-site residue.

Belongs to the enolase family. Mg(2+) serves as cofactor.

The protein resides in the cytoplasm. Its subcellular location is the secreted. It localises to the cell surface. It catalyses the reaction (2R)-2-phosphoglycerate = phosphoenolpyruvate + H2O. Its pathway is carbohydrate degradation; glycolysis; pyruvate from D-glyceraldehyde 3-phosphate: step 4/5. In terms of biological role, catalyzes the reversible conversion of 2-phosphoglycerate (2-PG) into phosphoenolpyruvate (PEP). It is essential for the degradation of carbohydrates via glycolysis. The protein is Enolase of Paenarthrobacter aurescens (strain TC1).